Reading from the N-terminus, the 330-residue chain is Free fatty acid receptor 2 (330 aa).

Over 1-8 the chain is Extracellular; that stretch reads MTPDWHSS. Residues 9 to 29 form a helical membrane-spanning segment; it reads LILTAYILIFLTGLPANLLAL. Residues 30 to 43 are Cytoplasmic-facing; sequence RAFVSRVRQPQPAP. Residues 44–64 form a helical membrane-spanning segment; it reads VHILLLNLTLADLLLLLLLPF. Topologically, residues 65-79 are extracellular; the sequence is RIVEAASNFRWYLPK. Residues 80–100 form a helical membrane-spanning segment; the sequence is IVCALTGFGFYSSIYCSTWLL. Over 101–126 the chain is Cytoplasmic; that stretch reads AGISIERYLGVAFPVQYKLSRRPLYG. A helical transmembrane segment spans residues 127-147; that stretch reads VIAALVAWIMSFGHCTIVIIV. Residues 148–184 are Extracellular-facing; the sequence is QYLNSTEQVGTENQITCYENFTQAQLDVVLPVRLELC. Asn-151 and Asn-167 each carry an N-linked (GlcNAc...) asparagine glycan. The chain crosses the membrane as a helical span at residues 185-205; the sequence is LVLFFVPMTVTIFCYWRFVWI. Residues 206–219 are Cytoplasmic-facing; the sequence is MLTQPHVGAQRRRR. A helical transmembrane segment spans residues 220–240; it reads AVGLAVVTLLNFLVCFGPYNM. Residues 241–255 lie on the Extracellular side of the membrane; it reads SHLVGFHLRQSPSWR. A helical transmembrane segment spans residues 256–276; the sequence is VEAVVFSSLNASLDPLLFYFS. Over 277–330 the chain is Cytoplasmic; the sequence is SSVVRRAFGKGLLLLRNPGSSMLGRGAEETVEGTKTDRGGSQTEGAQSSDFVTE. The interval 300 to 330 is disordered; sequence GRGAEETVEGTKTDRGGSQTEGAQSSDFVTE. Basic and acidic residues predominate over residues 302-314; it reads GAEETVEGTKTDR. Positions 315-330 are enriched in polar residues; that stretch reads GGSQTEGAQSSDFVTE.

It belongs to the G-protein coupled receptor 1 family. In terms of assembly, interacts with FCN1 (via Fibrinogen C-terminal domain). Detected in whole wall and separated mucosa in the distal ileum and colon. Expressed by enteroendocrine cells expressing peptide YY (PYY) (at protein level).

It is found in the cell membrane. Functionally, g protein-coupled receptor that is activated by a major product of dietary fiber digestion, the short chain fatty acids (SCFAs), and that plays a role in the regulation of whole-body energy homeostasis and in intestinal immunity. In omnivorous mammals, the short chain fatty acids acetate, propionate and butyrate are produced primarily by the gut microbiome that metabolizes dietary fibers. SCFAs serve as a source of energy but also act as signaling molecules. That G protein-coupled receptor is probably coupled to the pertussis toxin-sensitive, G(i/o)-alpha family of G proteins but also to the Gq family. Its activation results in the formation of inositol 1,4,5-trisphosphate, the mobilization of intracellular calcium, the phosphorylation of the MAPK3/ERK1 and MAPK1/ERK2 kinases and the inhibition of intracellular cAMP accumulation. May play a role in glucose homeostasis by regulating the secretion of GLP-1, in response to short-chain fatty acids accumulating in the intestine. May also regulate the production of LEP/Leptin, a hormone acting on the central nervous system to inhibit food intake. Finally, may also regulate whole-body energy homeostasis through adipogenesis regulating both differentiation and lipid storage of adipocytes. In parallel to its role in energy homeostasis, may also mediate the activation of the inflammatory and immune responses by SCFA in the intestine, regulating the rapid production of chemokines and cytokines. May also play a role in the resolution of the inflammatory response and control chemotaxis in neutrophils. In addition to SCFAs, may also be activated by the extracellular lectin FCN1 in a process leading to activation of monocytes and inducing the secretion of interleukin-8/IL-8 in response to the presence of microbes. The sequence is that of Free fatty acid receptor 2 (Ffar2) from Rattus norvegicus (Rat).